The sequence spans 156 residues: Ribosome-binding factor A (156 aa).

Residues 129–156 (AGEAQPYRVEEEPGDSEDETPPSSQDQR) form a disordered region.

It belongs to the RbfA family. In terms of assembly, monomer. Binds 30S ribosomal subunits, but not 50S ribosomal subunits or 70S ribosomes.

It localises to the cytoplasm. Its function is as follows. One of several proteins that assist in the late maturation steps of the functional core of the 30S ribosomal subunit. Associates with free 30S ribosomal subunits (but not with 30S subunits that are part of 70S ribosomes or polysomes). Required for efficient processing of 16S rRNA. May interact with the 5'-terminal helix region of 16S rRNA. This chain is Ribosome-binding factor A, found in Salinispora arenicola (strain CNS-205).